Here is a 298-residue protein sequence, read N- to C-terminus: Tyrosine recombinase XerC (298 aa).

In terms of domain architecture, Core-binding (CB) spans 1–84 (MNHIQEAFLN…TLRTFYEYWM (84 aa)). The region spanning 105–286 (YLPQFFYEEE…SNQQLRKVYL (182 aa)) is the Tyr recombinase domain. Catalysis depends on residues Arg145, Lys169, His238, Arg241, and His264. The active-site O-(3'-phospho-DNA)-tyrosine intermediate is the Tyr273.

It belongs to the 'phage' integrase family. XerC subfamily. Forms a cyclic heterotetrameric complex composed of two molecules of XerC and two molecules of XerD.

It localises to the cytoplasm. Functionally, site-specific tyrosine recombinase, which acts by catalyzing the cutting and rejoining of the recombining DNA molecules. The XerC-XerD complex is essential to convert dimers of the bacterial chromosome into monomers to permit their segregation at cell division. It also contributes to the segregational stability of plasmids. The polypeptide is Tyrosine recombinase XerC (Staphylococcus aureus (strain MSSA476)).